The chain runs to 390 residues: MQALINNVTHSFTSIFGYAPTHFIQAPGRVNLIGEHTDYNDGFVLPCAIDYQMVVAAAKRDDNLIRVIAVDYQNAQDQFSLEHPIEFLPNKMWANYIRGVIHFLQQAKYVFQGMDIAITGNVPQGAGLSSSAALEVAIGQTVKTLYQLPISQKEIALNGQKAENQFVGCNCGIMDQLISACGEESHALLIDCRSLATTAVKMPESAVVMIINSNKKRGLVDSEYNTRRQQCEEAAKILNVTALRDATLAQLQAKKALMNDKVYRRARHVITENERTLQAAEALKQGDLTKLSELMAQSHISMRDDFEITVNEVDTLVEIVKSVIGSQGGVRMTGGGFGGCVVALVTPDLVAKVTQAVEAQYKKQTGLKETIYVCSASQGAGYLEITNGIK.

Residue 35–38 coordinates substrate; that stretch reads EHTD. ATP is bound at residue 125–131; it reads GAGLSSS. Residues S131 and E163 each contribute to the Mg(2+) site. The Proton acceptor role is filled by D175. Y224 serves as a coordination point for substrate.

It belongs to the GHMP kinase family. GalK subfamily.

It is found in the cytoplasm. The catalysed reaction is alpha-D-galactose + ATP = alpha-D-galactose 1-phosphate + ADP + H(+). Its pathway is carbohydrate metabolism; galactose metabolism. In terms of biological role, catalyzes the transfer of the gamma-phosphate of ATP to D-galactose to form alpha-D-galactose-1-phosphate (Gal-1-P). The sequence is that of Galactokinase from Proteus mirabilis (strain HI4320).